The primary structure comprises 1269 residues: MTQDSEVLLWHTVLQRHRNYVHSCIGDFTLDRSSLATAEADTTSVKGPRSSKKRKELQLCLATQDCVELYDVSNGTLDALGKWPIAATILSMTKLNMDRCSHTILVLITDSGNLTFWQFERDSVSGKVYVRTLANEPISRSGIRRFVPQYQMVSDPQSRCVFFSGIERSKMCVLADWQRGKLVVGSPIEIQRSDRITLASAACDVSFDNPVNAAIEVESGTNDYYLSFYTMDLGLNTLLLRKEHLLEDKSINFVMQCPNLQQYKIKTRPNDETDQDSVNPFVICGYDGYLTLIDLEGFYEVSVQLPVRKTVSSTNIINGTIHKLKKDFFILMQSNHGDMYKVGIIPDEETKAPVLEIAYFDTLPTSEDIHIFKSGALFNVSEFGTSYLTQFESLGEDLEKITSYTPGRRSFIETESTLKNLSILDSLTSLNPLTSFHASNSTPLTILAAANQTENLVKLTSAVDFEELISTTLPRIPSKLWTVRIPKNETHSLIFLSMETSTTILKIHEGTVEDFGGDSNPFILNKPSLFVGAMVQRSIIQVTRDCLLQIIEMHDGPYTKKLEWYPPAGVGIVTAFCNETQLVVALTNHEICYFEIIEDSLNELQDRVEMDSTVNSIALLAGQKSGYCVLGCEDSSLQILNLQSKHPDFFTICAIQSLISKPHSLLFMRDTSDLKIHVGMKSGVYLSSKLNINDGTVFDVRTRFVGTKPVQVNLLDNIDINHKDDDDDEPGENDSKIDDFKKKISDFTPLVVLNSSISWVTYEIDDKITLRPLKTDEGITLKHINAFITDDIKRNGCCSITSKGQLLIGKLDNFLSWSNWFNEKKYTLVNDELKNAGNEEEDEDEDEDEDEDASEKYEIVGYQSQRILSDTTDNSLSYVISKTANKETSLSAIRDDKLLATNNGNTVVIIAKEVFNAVCSCNFGTNVKYIVISTESGKFIVIQIRVKNNVLETQYIHETMVHSKVNAMVSFGDKLACCILGNVVLFGLGKKQLLRKSITEMPPYITQVTALDQWDGTMLAVGDIRESVTIFKYDIDNNSFIGVADDIVKRHVTTVKFIDVSSVIGGDRFGNCWVLRVNYESDTRVASNIKACQYTLETLCHMYMNDTPMKFEIVNHMNMSDRPAILWIGLQGTIGCFVPLITRKEQQLYQSFQSTYAELDVLHFQDNNKPEEVDLEETEGALDEAYHTTKNTDHQDYVEGVISRVGRDFLSYRSSYAPSKNIIDGETLEQLTTYLPSDQRWIASKMKHADSGKLDIFNKYINEMRTNYV.

This sequence belongs to the RSE1 family. As to quaternary structure, associated with the spliceosome.

It is found in the nucleus. Functionally, involved in pre-mRNA splicing and cell cycle control. This is Pre-mRNA-splicing factor RSE1 (RSE1) from Kluyveromyces lactis (strain ATCC 8585 / CBS 2359 / DSM 70799 / NBRC 1267 / NRRL Y-1140 / WM37) (Yeast).